The primary structure comprises 131 residues: Class I hydrophobin POH2 (131 aa).

Positions 1–21 (MFFRTSSLFTTIVAFTVMAAA) are cleaved as a signal peptide. 4 disulfides stabilise this stretch: cysteine 50/cysteine 110, cysteine 57/cysteine 104, cysteine 58/cysteine 91, and cysteine 111/cysteine 124. N-linked (GlcNAc...) asparagine glycans are attached at residues asparagine 115 and asparagine 128.

The protein belongs to the fungal hydrophobin family. In terms of assembly, self-assembles to form functional amyloid fibrils called rodlets. Self-assembly into fibrillar rodlets occurs spontaneously at hydrophobic:hydrophilic interfaces and the rodlets further associate laterally to form amphipathic monolayers. Expressionn is switched off in the fruiting bodies but abundantly expressed in the vegetative mycelium of both monokaryon and dikaryon.

The protein localises to the secreted. It localises to the cell wall. Functionally, aerial growth, conidiation, and dispersal of filamentous fungi in the environment rely upon a capability of their secreting small amphipathic proteins called hydrophobins (HPBs) with low sequence identity. Class I can self-assemble into an outermost layer of rodlet bundles on aerial cell surfaces, conferring cellular hydrophobicity that supports fungal growth, development and dispersal; whereas Class II form highly ordered films at water-air interfaces through intermolecular interactions but contribute nothing to the rodlet structure. POH2 is a class I hydrophobin that causes a large drop in the water-surface tension, enabling hyphae to breach the interface and grow into the air, in both the primary and the secondary mycelium. In the latter mycelium POH2 maight also play a role in the emergence of fruiting bodies. Secreted POH2 could also play a role in facilitating lignin degradation. In Pleurotus ostreatus (Oyster mushroom), this protein is Class I hydrophobin POH2.